The sequence spans 143 residues: 3-hydroxyacyl-[acyl-carrier-protein] dehydratase FabZ (143 aa).

The active site involves histidine 49.

It belongs to the thioester dehydratase family. FabZ subfamily.

The protein localises to the cytoplasm. The enzyme catalyses a (3R)-hydroxyacyl-[ACP] = a (2E)-enoyl-[ACP] + H2O. In terms of biological role, involved in unsaturated fatty acids biosynthesis. Catalyzes the dehydration of short chain beta-hydroxyacyl-ACPs and long chain saturated and unsaturated beta-hydroxyacyl-ACPs. This Wolbachia pipientis wMel protein is 3-hydroxyacyl-[acyl-carrier-protein] dehydratase FabZ.